We begin with the raw amino-acid sequence, 554 residues long: 5'-AMP-activated protein kinase catalytic subunit alpha-1 (554 aa).

The 253-residue stretch at tyrosine 22–phenylalanine 274 folds into the Protein kinase domain. Threonine 27 is modified (phosphothreonine). ATP is bound by residues leucine 28–valine 36 and lysine 51. The Proton acceptor role is filled by aspartate 145. Threonine 178 is subject to Phosphothreonine; by LKB1 and CaMKK2. 2 positions are modified to phosphothreonine: threonine 264 and threonine 350. Residues glutamate 297–glutamate 376 are AIS. Phosphoserine is present on serine 351. Residue serine 355 is modified to Phosphoserine; by ULK1. A Phosphothreonine; by ULK1 modification is found at threonine 363. Position 377 is a phosphothreonine (threonine 377). Serine 392 bears the Phosphoserine; by ULK1 mark. Serine 462 bears the Phosphoserine mark. Residues lysine 480–arginine 500 are compositionally biased toward polar residues. The segment at lysine 480–threonine 531 is disordered. Phosphoserine; by ULK1 is present on serine 481. Position 483 is a phosphothreonine; by ULK1 (threonine 483). Residue threonine 485 is modified to Phosphothreonine. Residues serine 491, serine 503, serine 519, and serine 522 each carry the phosphoserine modification. Over residues serine 511–leucine 530 the composition is skewed to low complexity.

This sequence belongs to the protein kinase superfamily. CAMK Ser/Thr protein kinase family. SNF1 subfamily. As to quaternary structure, AMPK is a heterotrimer of an alpha catalytic subunit (PRKAA1 or PRKAA2), a beta (PRKAB1 or PRKAB2) and a gamma non-catalytic subunits (PRKAG1, PRKAG2 or PRKAG3). Interacts with FNIP1 and FNIP2. Requires Mg(2+) as cofactor. Post-translationally, ubiquitinated. Phosphorylated at Thr-183 by STK11/LKB1 in complex with STE20-related adapter-alpha (STRADA) pseudo kinase and CAB39. Also phosphorylated at Thr-183 by CAMKK2; triggered by a rise in intracellular calcium ions, without detectable changes in the AMP/ATP ratio. CAMKK1 can also phosphorylate Thr-183, but at a much lower level. Dephosphorylated by protein phosphatase 2A and 2C (PP2A and PP2C). Phosphorylated by ULK1 and ULK2; leading to negatively regulate AMPK activity and suggesting the existence of a regulatory feedback loop between ULK1, ULK2 and AMPK. Dephosphorylated by PPM1A and PPM1B. In terms of processing, glycosylated; O-GlcNAcylated by OGT, promoting the AMP-activated protein kinase (AMPK) activity.

It is found in the cytoplasm. Its subcellular location is the nucleus. The catalysed reaction is L-seryl-[protein] + ATP = O-phospho-L-seryl-[protein] + ADP + H(+). It carries out the reaction L-threonyl-[protein] + ATP = O-phospho-L-threonyl-[protein] + ADP + H(+). The enzyme catalyses L-seryl-[acetyl-CoA carboxylase] + ATP = O-phospho-L-seryl-[acetyl-CoA carboxylase] + ADP + H(+). It catalyses the reaction L-seryl-[3-hydroxy-3-methylglutaryl-coenzyme A reductase] + ATP = O-phospho-L-seryl-[3-hydroxy-3-methylglutaryl-coenzyme A reductase] + ADP + H(+). The catalysed reaction is L-seryl-[tau protein] + ATP = O-phospho-L-seryl-[tau protein] + ADP + H(+). It carries out the reaction L-threonyl-[tau protein] + ATP = O-phospho-L-threonyl-[tau protein] + ADP + H(+). Its activity is regulated as follows. Activated by phosphorylation on Thr-183. Binding of AMP to non-catalytic gamma subunit (PRKAG1, PRKAG2 or PRKAG3) results in allosteric activation, inducing phosphorylation on Thr-183. AMP-binding to gamma subunit also sustains activity by preventing dephosphorylation of Thr-183. ADP also stimulates Thr-183 phosphorylation, without stimulating already phosphorylated AMPK. ATP promotes dephosphorylation of Thr-183, rendering the enzyme inactive. Under physiological conditions AMPK mainly exists in its inactive form in complex with ATP, which is much more abundant than AMP. Selectively inhibited by compound C (6-[4-(2-Piperidin-1-yl-ethoxy)-phenyl)]-3-pyridin-4-yl-pyyrazolo[1,5-a] pyrimidine. Activated by resveratrol, a natural polyphenol present in red wine, and S17834, a synthetic polyphenol. Its function is as follows. Catalytic subunit of AMP-activated protein kinase (AMPK), an energy sensor protein kinase that plays a key role in regulating cellular energy metabolism. In response to reduction of intracellular ATP levels, AMPK activates energy-producing pathways and inhibits energy-consuming processes: inhibits protein, carbohydrate and lipid biosynthesis, as well as cell growth and proliferation. AMPK acts via direct phosphorylation of metabolic enzymes, and by longer-term effects via phosphorylation of transcription regulators. Regulates lipid synthesis by phosphorylating and inactivating lipid metabolic enzymes such as ACACA, ACACB, GYS1, HMGCR and LIPE; regulates fatty acid and cholesterol synthesis by phosphorylating acetyl-CoA carboxylase (ACACA and ACACB) and hormone-sensitive lipase (LIPE) enzymes, respectively. Promotes lipolysis of lipid droplets by mediating phosphorylation of isoform 1 of CHKA (CHKalpha2). Regulates insulin-signaling and glycolysis by phosphorylating IRS1, PFKFB2 and PFKFB3. AMPK stimulates glucose uptake in muscle by increasing the translocation of the glucose transporter SLC2A4/GLUT4 to the plasma membrane, possibly by mediating phosphorylation of TBC1D4/AS160. Regulates transcription and chromatin structure by phosphorylating transcription regulators involved in energy metabolism such as CRTC2/TORC2, FOXO3, histone H2B, HDAC5, MEF2C, MLXIPL/ChREBP, EP300, HNF4A, p53/TP53, SREBF1, SREBF2 and PPARGC1A. Acts as a key regulator of glucose homeostasis in liver by phosphorylating CRTC2/TORC2, leading to CRTC2/TORC2 sequestration in the cytoplasm. In response to stress, phosphorylates 'Ser-36' of histone H2B (H2BS36ph), leading to promote transcription. Acts as a key regulator of cell growth and proliferation by phosphorylating FNIP1, TSC2, RPTOR, WDR24 and ATG1/ULK1: in response to nutrient limitation, negatively regulates the mTORC1 complex by phosphorylating RPTOR component of the mTORC1 complex and by phosphorylating and activating TSC2. Also phosphorylates and inhibits GATOR2 subunit WDR24 in response to nutrient limitation, leading to suppress glucose-mediated mTORC1 activation. In response to energetic stress, phosphorylates FNIP1, inactivating the non-canonical mTORC1 signaling, thereby promoting nuclear translocation of TFEB and TFE3, and inducing transcription of lysosomal or autophagy genes. In response to nutrient limitation, promotes autophagy by phosphorylating and activating ATG1/ULK1. In that process also activates WDR45/WIPI4. Phosphorylates CASP6, thereby preventing its autoprocessing and subsequent activation. In response to nutrient limitation, phosphorylates transcription factor FOXO3 promoting FOXO3 mitochondrial import. Also acts as a regulator of cellular polarity by remodeling the actin cytoskeleton; probably by indirectly activating myosin. AMPK also acts as a regulator of circadian rhythm by mediating phosphorylation of CRY1, leading to destabilize it. May regulate the Wnt signaling pathway by phosphorylating CTNNB1, leading to stabilize it. Also has tau-protein kinase activity: in response to amyloid beta A4 protein (APP) exposure, activated by CAMKK2, leading to phosphorylation of MAPT/TAU; however the relevance of such data remains unclear in vivo. Also phosphorylates CFTR, EEF2K, KLC1, NOS3 and SLC12A1. Regulates hepatic lipogenesis. Activated via SIRT3, represses sterol regulatory element-binding protein (SREBP) transcriptional activities and ATP-consuming lipogenesis to restore cellular energy balance. Upon stress, regulates mitochondrial fragmentation through phosphorylation of MTFR1L. The chain is 5'-AMP-activated protein kinase catalytic subunit alpha-1 (PRKAA1) from Pongo abelii (Sumatran orangutan).